The following is a 209-amino-acid chain: Putative 3-methyladenine DNA glycosylase (209 aa).

The tract at residues 189–209 (HVSTTRLGAPKKKRQKRLERR) is disordered. Residues 197 to 209 (APKKKRQKRLERR) are compositionally biased toward basic residues.

It belongs to the DNA glycosylase MPG family.

This is Putative 3-methyladenine DNA glycosylase from Chlorobaculum parvum (strain DSM 263 / NCIMB 8327) (Chlorobium vibrioforme subsp. thiosulfatophilum).